Here is a 273-residue protein sequence, read N- to C-terminus: Large ribosomal subunit protein uL2 (273 aa).

Positions 224–260 (AMNPVDHPHGGGEGKTSGGRHPVTPWGKKTKGKKTRK) are disordered. Over residues 251–260 (KKTKGKKTRK) the composition is skewed to basic residues.

The protein belongs to the universal ribosomal protein uL2 family. Part of the 50S ribosomal subunit. Forms a bridge to the 30S subunit in the 70S ribosome.

In terms of biological role, one of the primary rRNA binding proteins. Required for association of the 30S and 50S subunits to form the 70S ribosome, for tRNA binding and peptide bond formation. It has been suggested to have peptidyltransferase activity; this is somewhat controversial. Makes several contacts with the 16S rRNA in the 70S ribosome. The chain is Large ribosomal subunit protein uL2 from Orientia tsutsugamushi (strain Ikeda) (Rickettsia tsutsugamushi).